The primary structure comprises 438 residues: Aspartate--tRNA(Asp/Asn) ligase (438 aa).

Residue Glu176 coordinates L-aspartate. The tract at residues 198-201 (QLYK) is aspartate. An L-aspartate-binding site is contributed by Arg220. Residues 220 to 222 (RAE), 228 to 230 (RHL), and Glu361 contribute to the ATP site. Mg(2+) is bound by residues Glu361 and Ser364. 2 residues coordinate L-aspartate: Ser364 and Arg368. Residue 409-412 (GIER) coordinates ATP.

The protein belongs to the class-II aminoacyl-tRNA synthetase family. Type 2 subfamily. In terms of assembly, homodimer. Mg(2+) serves as cofactor.

Its subcellular location is the cytoplasm. The enzyme catalyses tRNA(Asx) + L-aspartate + ATP = L-aspartyl-tRNA(Asx) + AMP + diphosphate. In terms of biological role, aspartyl-tRNA synthetase with relaxed tRNA specificity since it is able to aspartylate not only its cognate tRNA(Asp) but also tRNA(Asn). Reaction proceeds in two steps: L-aspartate is first activated by ATP to form Asp-AMP and then transferred to the acceptor end of tRNA(Asp/Asn). In Methanococcus aeolicus (strain ATCC BAA-1280 / DSM 17508 / OCM 812 / Nankai-3), this protein is Aspartate--tRNA(Asp/Asn) ligase.